A 326-amino-acid polypeptide reads, in one-letter code: tRNA uridine(34) hydroxylase (326 aa).

The Rhodanese domain maps to alanine 123–serine 217. Cysteine 177 (cysteine persulfide intermediate) is an active-site residue. Positions glutamine 278–glutamine 288 are enriched in basic and acidic residues. Residues glutamine 278 to alanine 326 form a disordered region. A compositionally biased stretch (basic residues) spans alanine 317–alanine 326.

Belongs to the TrhO family.

It carries out the reaction uridine(34) in tRNA + AH2 + O2 = 5-hydroxyuridine(34) in tRNA + A + H2O. Catalyzes oxygen-dependent 5-hydroxyuridine (ho5U) modification at position 34 in tRNAs. The protein is tRNA uridine(34) hydroxylase of Vibrio parahaemolyticus serotype O3:K6 (strain RIMD 2210633).